A 143-amino-acid polypeptide reads, in one-letter code: Rheacalcin-2 (143 aa).

Cystine bridges form between Cys-6–Cys-17, Cys-34–Cys-139, and Cys-114–Cys-131. The C-type lectin domain maps to 13–140 (FDGRCFGFFP…CSDRKPFICE (128 aa)). Ser-66 and Ser-68 each carry phosphoserine.

It localises to the secreted. The protein resides in the extracellular space. It is found in the extracellular matrix. This chain is Rheacalcin-2, found in Rhea americana (Greater rhea).